Reading from the N-terminus, the 637-residue chain is MPERIEWLEDGTPYSPRFGDRYRSESGGLDQAREVFLKGCGLPAAWAGQPQWCVLETGFGLGLNFLVTWQAWKTDPLRPRLLHFVSTEAFPASAADVLRSVQVHPELLPLARQLHDQLWGLLPGFHRLVFEEGRVMLTLCIGDAKAMLREQSFEADSVYLDGFNPGLKPADSPDIWDLHTFKAVARCCRRGTRVATWTVARSVRDALAQCGFVVKKTPGIPPKRDNLQGEFNPAWEPKKSMLPGIRRQAGSCVVIGAGLAGAAVAASLARRGWRVVVLDAADAPARGASGLPAGVLAPHVSPDDSLLSRLSRSGVRATLQQAHALLDAGTDWNPTGVLEHCVDHARKLPAAWQSDWAEAAQDWTCLATSGQLAHCRLPASAPALWHVRAGWIKPASLVQAWLTTPGVEFHDHASVGQLIRQPDSWQVLDANGHVLACAELVVLAAGYASRALAEAAVPPTSPPLALQAIRGQVSWALHPPGAADALPAFPVNGHGSLIPALPLSGNANELAWVTGSTFERDNALNDLKPEDDSHNLDRLRTLLPDVAPGLTGQLEMGQVKAWAGVRCATPSRLPALGPLAAPNLWVCSGMGSRGLTFAALCAELLAARLHAEPLPLEQRLAEALRPQYGEAKLVSED.

A tRNA (mnm(5)s(2)U34)-methyltransferase region spans residues 1–232 (MPERIEWLED…KRDNLQGEFN (232 aa)). The FAD-dependent cmnm(5)s(2)U34 oxidoreductase stretch occupies residues 255–637 (IGAGLAGAAV…YGEAKLVSED (383 aa)).

In the N-terminal section; belongs to the methyltransferase superfamily. tRNA (mnm(5)s(2)U34)-methyltransferase family. It in the C-terminal section; belongs to the DAO family. The cofactor is FAD.

The protein resides in the cytoplasm. It carries out the reaction 5-aminomethyl-2-thiouridine(34) in tRNA + S-adenosyl-L-methionine = 5-methylaminomethyl-2-thiouridine(34) in tRNA + S-adenosyl-L-homocysteine + H(+). In terms of biological role, catalyzes the last two steps in the biosynthesis of 5-methylaminomethyl-2-thiouridine (mnm(5)s(2)U) at the wobble position (U34) in tRNA. Catalyzes the FAD-dependent demodification of cmnm(5)s(2)U34 to nm(5)s(2)U34, followed by the transfer of a methyl group from S-adenosyl-L-methionine to nm(5)s(2)U34, to form mnm(5)s(2)U34. The chain is tRNA 5-methylaminomethyl-2-thiouridine biosynthesis bifunctional protein MnmC from Polaromonas sp. (strain JS666 / ATCC BAA-500).